Consider the following 281-residue polypeptide: Diaminopimelate epimerase (281 aa).

N13 and N66 together coordinate substrate. C75 functions as the Proton donor in the catalytic mechanism. Substrate-binding positions include 76–77 (GN), N164, N197, and 215–216 (ER). The active-site Proton acceptor is C224. 225–226 (GT) is a binding site for substrate.

It belongs to the diaminopimelate epimerase family. Homodimer.

It is found in the cytoplasm. The catalysed reaction is (2S,6S)-2,6-diaminopimelate = meso-2,6-diaminopimelate. The protein operates within amino-acid biosynthesis; L-lysine biosynthesis via DAP pathway; DL-2,6-diaminopimelate from LL-2,6-diaminopimelate: step 1/1. Functionally, catalyzes the stereoinversion of LL-2,6-diaminopimelate (L,L-DAP) to meso-diaminopimelate (meso-DAP), a precursor of L-lysine and an essential component of the bacterial peptidoglycan. This is Diaminopimelate epimerase from Picosynechococcus sp. (strain ATCC 27264 / PCC 7002 / PR-6) (Agmenellum quadruplicatum).